We begin with the raw amino-acid sequence, 504 residues long: MAGGALTDEGGLKRAHLYEHRITSYFIFACIVGSMGGSLFGYDLGVSGGVTSMDDFLKEFFPGIYKRKQMHLNETDYCKYDNQILTLFTSSLYFAGLISTFGASYVTRIYGRRGSILVGSVSFFLGGVINAAAKNILMLILGRIFLGIGIGFGNQAVPLYLSEMAPAKIRGTVNQLFQLTTCIGILVANLINYKTEQIHPWGWRLSLGLATVPAILMFLGGLVLPETPNSLVEQGKLEKAKAVLIKVRGTNNIEAEFQDLVEASDAARAVKNPFRNLLARRNRPQLVIGAIGLPAFQQLTGMNSILFYAPVMFQSLGFGGSASLISSTITNAALVVAAIMSMYSADKFGRRFLLLEASVEMFCYMVVVGVTLALKFGEGKELPKSLGLILVVLICLFVLAYGRSWGPMGWLVPSELFPLETRSAGQSVVVCVNLFFTALIAQCFLVSLCHLKYGIFLLFAGLILGMGSFVYFLLPETKQVPIEEVYLLWRQHWLWKKYVEDVDE.

Residues 1–25 (MAGGALTDEGGLKRAHLYEHRITSY) are Cytoplasmic-facing. Transmembrane regions (helical) follow at residues 26-46 (FIFACIVGSMGGSLFGYDLGV), 84-104 (ILTLFTSSLYFAGLISTFGAS), 121-141 (VSFFLGGVINAAAKNILMLIL), 144-164 (IFLGIGIGFGNQAVPLYLSEM), 171-191 (GTVNQLFQLTTCIGILVANLI), 205-225 (LSLGLATVPAILMFLGGLVLP), 286-308 (LVIGAIGLPAFQQLTGMNSILFY), 315-337 (SLGFGGSASLISSTITNAALVVA), 352-372 (FLLLEASVEMFCYMVVVGVTL), 382-402 (LPKSLGLILVVLICLFVLAYG), 428-448 (VVVCVNLFFTALIAQCFLVSL), and 454-474 (GIFLLFAGLILGMGSFVYFLL). The Cytoplasmic segment spans residues 475-504 (PETKQVPIEEVYLLWRQHWLWKKYVEDVDE).

It belongs to the major facilitator superfamily. Sugar transporter (TC 2.A.1.1) family.

It localises to the membrane. Functionally, mediates an active uptake of hexoses, probably by sugar/hydrogen symport. This Arabidopsis thaliana (Mouse-ear cress) protein is Sugar transport protein 14 (STP14).